The primary structure comprises 733 residues: Oligopeptide transporter 8 (733 aa).

The next 14 membrane-spanning stretches (helical) occupy residues 42-62, 66-86, 115-135, 147-167, 209-229, 244-264, 281-301, 357-377, 413-433, 442-462, 531-551, 596-616, 644-664, and 677-697; these read MWVL…FFWY, PLTI…HLMA, VLIT…HILS, FLPA…WAGL, FFVI…YLFT, SILV…SFGL, FFAS…ITPL, FAVT…HVLI, LWWF…ICIY, WWGA…VGVI, VGTL…MAEI, YSNI…VYLA, ASAV…HFVF, and VLSG…FLAL.

Belongs to the oligopeptide OPT transporter (TC 2.A.67.1) family.

The protein localises to the membrane. May be involved in the translocation of tetra- and pentapeptides across the cellular membrane in an energy-dependent manner. This chain is Oligopeptide transporter 8 (OPT8), found in Arabidopsis thaliana (Mouse-ear cress).